Reading from the N-terminus, the 148-residue chain is Endoribonuclease YbeY (148 aa).

3 residues coordinate Zn(2+): H112, H116, and H122.

The protein belongs to the endoribonuclease YbeY family. Zn(2+) serves as cofactor.

The protein resides in the cytoplasm. In terms of biological role, single strand-specific metallo-endoribonuclease involved in late-stage 70S ribosome quality control and in maturation of the 3' terminus of the 16S rRNA. In Albidiferax ferrireducens (strain ATCC BAA-621 / DSM 15236 / T118) (Rhodoferax ferrireducens), this protein is Endoribonuclease YbeY.